The following is a 522-amino-acid chain: Alanine aminotransferase 2 (522 aa).

Lys340 bears the N6-(pyridoxal phosphate)lysine mark. Residues Lys414, Lys504, and Lys511 each carry the N6-acetyllysine modification.

This sequence belongs to the class-I pyridoxal-phosphate-dependent aminotransferase family. Alanine aminotransferase subfamily. As to quaternary structure, homodimer. The cofactor is pyridoxal 5'-phosphate. In terms of tissue distribution, specifically induced in fatty liver. Highly expressed in muscle, liver and white adipose tissue. Moderately expressed in brain and kidney and expressed at low levels in the heart.

It catalyses the reaction L-alanine + 2-oxoglutarate = pyruvate + L-glutamate. The protein operates within amino-acid degradation; L-alanine degradation via transaminase pathway; pyruvate from L-alanine: step 1/1. Functionally, catalyzes the reversible transamination between alanine and 2-oxoglutarate to form pyruvate and glutamate. This is Alanine aminotransferase 2 (Gpt2) from Mus musculus (Mouse).